Reading from the N-terminus, the 491-residue chain is Nucleotidyltransferase MB21D2 (491 aa).

Polar residues predominate over residues 431 to 442; sequence RGSTTSIPSPQS. A disordered region spans residues 431-452; the sequence is RGSTTSIPSPQSDGGDPNQPDD. Position 435 is a phosphothreonine (Thr-435). Phosphoserine is present on residues Ser-436, Ser-439, and Ser-442.

The protein belongs to the mab-21 family.

Functionally, probable nucleotidyltransferase that catalyzes the formation of cyclic dinucleotide second messenger in response to some unknown stimulus. The polypeptide is Nucleotidyltransferase MB21D2 (Homo sapiens (Human)).